A 257-amino-acid chain; its full sequence is Imidazole glycerol phosphate synthase subunit HisF (257 aa).

Residues Asp-12 and Asp-131 contribute to the active site.

Belongs to the HisA/HisF family. In terms of assembly, heterodimer of HisH and HisF.

The protein localises to the cytoplasm. It catalyses the reaction 5-[(5-phospho-1-deoxy-D-ribulos-1-ylimino)methylamino]-1-(5-phospho-beta-D-ribosyl)imidazole-4-carboxamide + L-glutamine = D-erythro-1-(imidazol-4-yl)glycerol 3-phosphate + 5-amino-1-(5-phospho-beta-D-ribosyl)imidazole-4-carboxamide + L-glutamate + H(+). Its pathway is amino-acid biosynthesis; L-histidine biosynthesis; L-histidine from 5-phospho-alpha-D-ribose 1-diphosphate: step 5/9. Functionally, IGPS catalyzes the conversion of PRFAR and glutamine to IGP, AICAR and glutamate. The HisF subunit catalyzes the cyclization activity that produces IGP and AICAR from PRFAR using the ammonia provided by the HisH subunit. In Burkholderia mallei (strain NCTC 10247), this protein is Imidazole glycerol phosphate synthase subunit HisF.